We begin with the raw amino-acid sequence, 173 residues long: Protein tyrosine phosphatase type IVA 3 (173 aa).

Positions 8-161 constitute a Tyrosine-protein phosphatase domain; that stretch reads APVEVSYRHM…YRPKQRLRFK (154 aa). A disulfide bridge links C49 with C104. The Proton donor role is filled by D72. The active-site Phosphocysteine intermediate is C104. Substrate is bound at residue R110. C170 bears the Cysteine methyl ester mark. C170 carries the S-farnesyl cysteine lipid modification. A propeptide spans 171–173 (removed in mature form); the sequence is CVM.

This sequence belongs to the protein-tyrosine phosphatase family. In terms of assembly, interacts with tubulin. In terms of processing, farnesylated. Farnesylation is required for membrane targeting. Unfarnesylated forms are shifted into the nucleus. In terms of tissue distribution, present in the small intestine, where it is located in the differentiated epithelial cells of the villus but not in the proliferating crypt cells (at protein level). Expressed in heart and skeletal muscle, and at lower levels in lung, spleen and testis.

The protein localises to the cell membrane. Its subcellular location is the early endosome. It carries out the reaction O-phospho-L-tyrosyl-[protein] + H2O = L-tyrosyl-[protein] + phosphate. Its activity is regulated as follows. Inhibited by sodium orthovanadate and peroxovanadium compounds, and by pentamidine. In terms of biological role, protein tyrosine phosphatase which stimulates progression from G1 into S phase during mitosis. Enhances cell proliferation, cell motility and invasive activity, and promotes cancer metastasis. May be involved in the progression of cardiac hypertrophy by inhibiting intracellular calcium mobilization in response to angiotensin II. This chain is Protein tyrosine phosphatase type IVA 3 (Ptp4a3), found in Mus musculus (Mouse).